A 44-amino-acid polypeptide reads, in one-letter code: Photosystem I reaction center subunit IX (44 aa).

A helical membrane pass occupies residues 7–27; sequence YLSVAPVLSTLWFGSLAGLLI.

It belongs to the PsaJ family.

Its subcellular location is the plastid. The protein localises to the chloroplast thylakoid membrane. Its function is as follows. May help in the organization of the PsaE and PsaF subunits. The polypeptide is Photosystem I reaction center subunit IX (Arabis hirsuta (Hairy rock-cress)).